The sequence spans 398 residues: Trans-2-enoyl-CoA reductase [NADH] (398 aa).

NAD(+) is bound by residues 47 to 52 (GASSGF), 74 to 75 (YE), 111 to 112 (DA), and 139 to 140 (LA). A substrate-binding site is contributed by Y225. Y235 functions as the Proton donor in the catalytic mechanism. NAD(+)-binding positions include K244 and 274-276 (LVT).

It belongs to the TER reductase family. In terms of assembly, monomer.

The catalysed reaction is a 2,3-saturated acyl-CoA + NAD(+) = a (2E)-enoyl-CoA + NADH + H(+). It participates in lipid metabolism; fatty acid biosynthesis. Involved in the fatty acid synthesis (FAS II). Catalyzes the reduction of the carbon-carbon double bond of crotonyl-CoA to yield butyryl-CoA. The polypeptide is Trans-2-enoyl-CoA reductase [NADH] (Clostridium acetobutylicum (strain ATCC 824 / DSM 792 / JCM 1419 / IAM 19013 / LMG 5710 / NBRC 13948 / NRRL B-527 / VKM B-1787 / 2291 / W)).